We begin with the raw amino-acid sequence, 120 residues long: UPF0295 protein Aflv_0370 (120 aa).

Transmembrane regions (helical) follow at residues 12-32 and 42-62; these read IRTF…GGIF and LFMI…FWIG.

The protein belongs to the UPF0295 family.

It is found in the cell membrane. This is UPF0295 protein Aflv_0370 from Anoxybacillus flavithermus (strain DSM 21510 / WK1).